Reading from the N-terminus, the 254-residue chain is Small ribosomal subunit protein eS1 (254 aa).

Ala-2 bears the N-acetylalanine; partial mark.

This sequence belongs to the eukaryotic ribosomal protein eS1 family. As to quaternary structure, component of the small ribosomal subunit. Mature ribosomes consist of a small (40S) and a large (60S) subunit. The 40S subunit contains about 33 different proteins and 1 molecule of RNA (18S). The 60S subunit contains about 49 different proteins and 3 molecules of RNA (25S, 5.8S and 5S).

It is found in the cytoplasm. This is Small ribosomal subunit protein eS1 from Zygosaccharomyces rouxii (strain ATCC 2623 / CBS 732 / NBRC 1130 / NCYC 568 / NRRL Y-229).